Here is a 453-residue protein sequence, read N- to C-terminus: Presenilin-like protein At1g08700 (453 aa).

Residues 1–8 (MESSILDS) are Cytoplasmic-facing. The helical transmembrane segment at 9 to 29 (LGVEIIGVMAPVSICMFLVVL) threads the bilayer. The Lumenal portion of the chain corresponds to 30 to 68 (LTYSLSVTSDPQIRSAANLIYIENPSDSTTVKLEGSLAN). A helical transmembrane segment spans residues 69 to 89 (AIVFVVLIAAVTFILVLLFYY). The Cytoplasmic segment spans residues 90–103 (NFTNFLKHYMRFSA). A helical transmembrane segment spans residues 104 to 124 (FFVLGTMGGAIFLSIIQHFSI). Residues 125–132 (PVDSITCF) lie on the Lumenal side of the membrane. Residues 133–153 (ILLFNFTILGTLSVFAGGIPI) form a helical membrane-spanning segment. Residues 154–159 (VLRQCY) are Cytoplasmic-facing. Helical transmembrane passes span 160–180 (MVVMGIVVAAWFTKLPEWTTW) and 181–201 (FILVALALYDLVAVLAPGGPL). The active site involves aspartate 190. Over 202 to 369 (KLLVELASSR…VVDISNRGIK (168 aa)) the chain is Cytoplasmic. Disordered regions lie at residues 226–248 (VSSGNQRRNRGSSLRALVGGGGV) and 292–329 (IGNGSRGGLERSPLVGSPSASEHSTSVGTRGNMEDRES). Residues 227–240 (SSGNQRRNRGSSLR) are compositionally biased toward low complexity. A Phosphoserine modification is found at serine 296. Residues 309–320 (PSASEHSTSVGT) show a composition bias toward polar residues. Residues 370 to 390 (LGLGDFIFYSVLVGRAAMYDL) traverse the membrane as a helical segment. Residue aspartate 374 is part of the active site. At 391 to 392 (MT) the chain is on the lumenal side. The chain crosses the membrane as a helical span at residues 393 to 413 (VYACYLAIISGLGCTLILLSV). Topologically, residues 414–417 (YNRA) are cytoplasmic. An intramembrane region (helical) is located at residues 418 to 438 (LPALPISIMLGVVFYFLTRLL). The short motif at 419–421 (PAL) is the PAL element. Residues 439–453 (MEPFVVGVTTNLMMF) are Cytoplasmic-facing.

This sequence belongs to the peptidase A22A family. In terms of assembly, homodimer. Probable component of the gamma-secretase complex, a complex composed of a presenilin homodimer, nicastrin, APH1 and PEN2.

The protein localises to the endoplasmic reticulum membrane. It localises to the golgi apparatus membrane. Its function is as follows. Probable subunit of the gamma-secretase complex, an endoprotease complex that catalyzes the intramembrane cleavage of integral membrane proteins such as Notch receptors. This is Presenilin-like protein At1g08700 from Arabidopsis thaliana (Mouse-ear cress).